The following is a 431-amino-acid chain: Adenylosuccinate lyase (431 aa).

Residues 4–5 (RY), 67–69 (RHD), and 93–94 (TS) contribute to the N(6)-(1,2-dicarboxyethyl)-AMP site. The active-site Proton donor/acceptor is the His141. Gln212 contacts N(6)-(1,2-dicarboxyethyl)-AMP. Catalysis depends on Ser262, which acts as the Proton donor/acceptor. Residues Ser263, 268-270 (KRN), Asn276, and 307-311 (SAERI) each bind N(6)-(1,2-dicarboxyethyl)-AMP.

This sequence belongs to the lyase 1 family. Adenylosuccinate lyase subfamily. Homodimer and homotetramer. Residues from neighboring subunits contribute catalytic and substrate-binding residues to each active site.

It carries out the reaction N(6)-(1,2-dicarboxyethyl)-AMP = fumarate + AMP. The enzyme catalyses (2S)-2-[5-amino-1-(5-phospho-beta-D-ribosyl)imidazole-4-carboxamido]succinate = 5-amino-1-(5-phospho-beta-D-ribosyl)imidazole-4-carboxamide + fumarate. It participates in purine metabolism; AMP biosynthesis via de novo pathway; AMP from IMP: step 2/2. The protein operates within purine metabolism; IMP biosynthesis via de novo pathway; 5-amino-1-(5-phospho-D-ribosyl)imidazole-4-carboxamide from 5-amino-1-(5-phospho-D-ribosyl)imidazole-4-carboxylate: step 2/2. Catalyzes two reactions in de novo purine nucleotide biosynthesis. Catalyzes the breakdown of 5-aminoimidazole- (N-succinylocarboxamide) ribotide (SAICAR or 2-[5-amino-1-(5-phospho-beta-D-ribosyl)imidazole-4-carboxamido]succinate) to 5-aminoimidazole-4-carboxamide ribotide (AICAR or 5-amino-1-(5-phospho-beta-D-ribosyl)imidazole-4-carboxamide) and fumarate, and of adenylosuccinate (ADS or N(6)-(1,2-dicarboxyethyl)-AMP) to adenosine monophosphate (AMP) and fumarate. This is Adenylosuccinate lyase (purB) from Staphylococcus haemolyticus (strain JCSC1435).